A 439-amino-acid chain; its full sequence is Ribulose bisphosphate carboxylase/oxygenase activase 2, chloroplastic (439 aa).

Residues 1 to 58 (MATSVSTIGAANKAPLSLNNSVAGTSVPSTAFFGKTLKKVYGKGVSSPKVTNRSLRIA) constitute a chloroplast transit peptide. 169-176 (GGKGQGKS) serves as a coordination point for ATP.

This sequence belongs to the RuBisCO activase family.

The protein resides in the plastid. It localises to the chloroplast stroma. Activation of RuBisCO (ribulose-1,5-bisphosphate carboxylase/oxygenase; EC 4.1.1.39) involves the ATP-dependent carboxylation of the epsilon-amino group of lysine leading to a carbamate structure. In Nicotiana tabacum (Common tobacco), this protein is Ribulose bisphosphate carboxylase/oxygenase activase 2, chloroplastic (RCA).